The chain runs to 694 residues: MLHVSRLLANGGVKNLCDKFKVKIKNYTEHDLMVLNYESFERDRDHPVVVECRGLILNSRTYAVVSRSFDRFFNFQELLQNIGGEDAHHKLFQSKENFKFYEKIDGSLIKIYKYNGEWHASTRGSAFAENLCVSDVTFKRLVLQALQLDEAHNQFQALCNEYLDCASTHMFELTSKHNRIVTVYDEQPTLWYLASRNNETGDYFYCSNLPFCKYPKCYEFTSVQECVEHAAQLKNLEEGFVVYDKNNAPLCKIKSDVYLNMHKNQSRAENPTKLAQLVINGEHDDFLALFPHLKSVIKPYVDARNTFTNESTINIMVSGLTLNQQRFNELVQTLPWKCLAYRCRKAQTIDVESEFLKLTEPEKIKMIKNIIKFVSTKQALNNKLAPTIKLPSSKQLLVLIGISGSGKSTYAKSLKGYTEINRDDVRVKLFLNGDYTKLNAFYNQSRKCRQTKEEQITKMCIEQFLKAAKCGANVVVSDTNLNTQSVDMWQKMAATHNYHFLTRLMDVSLETALERNYKRSDKFPLNPETIKKQYKKFLKVNNFEYYVPVGDKFPRAVLCDLDGTVALPTNRSFYDFDNRVAQDEARLDVITCVKYLANCHDAIIVFMSGRSVICEQPTRNWIEKYFDIKSYKLFMRPSDDTCKDYLLKLKLFNNYIRGKYNVIAVFDDRPCVVRMWQDLKIPTVFNVCRDYLEF.

Positions 1 to 385 (MLHVSRLLAN…TKQALNNKLA (385 aa)) are ligase domain. Positions 394-694 (KQLLVLIGIS…FNVCRDYLEF (301 aa)) are bifunctional 5'-OH polynucleotide kinase/polynucleotide 3'-phosphatase. 401–408 (GISGSGKS) is an ATP binding site.

It carries out the reaction a 5'-end dephospho-2'-deoxyribonucleoside-DNA + ATP = a 5'-end 5'-phospho-2'-deoxyribonucleoside-DNA + ADP + H(+). The enzyme catalyses ATP + (ribonucleotide)n-3'-hydroxyl + 5'-phospho-(ribonucleotide)m = (ribonucleotide)n+m + AMP + diphosphate.. In terms of biological role, trifunctional enzyme that possesses a bifunctional polynucleotide kinase/phosphatase activity and an ATP-dependent RNA ligase activity. May therefore play a role to evade an RNA damage-based host response. The polypeptide is Putative bifunctional polynucleotide kinase/RNA ligase (PNK/PNL) (Autographa californica nuclear polyhedrosis virus (AcMNPV)).